The chain runs to 1917 residues: Diacylglycerol kinase eta (1917 aa).

Basic and acidic residues predominate over residues Met1–His10. A disordered region spans residues Met1 to Ser37. Residues Arg23–Ser37 are compositionally biased toward low complexity. The PH domain maps to Ala82–Ala175. 2 Phorbol-ester/DAG-type zinc fingers span residues His195–Cys245 and Pro268–Cys319. One can recognise a DAGKc domain in the interval Gly350 to Lys486. 3 disordered regions span residues Thr1015 to Ile1053, Leu1114 to Glu1149, and Lys1380 to Asn1399. A compositionally biased stretch (polar residues) spans Pro1128–Thr1145. An SAM domain is found at Trp1854–Asn1917.

This sequence belongs to the eukaryotic diacylglycerol kinase family.

The protein localises to the cytoplasm. The enzyme catalyses a 1,2-diacyl-sn-glycerol + ATP = a 1,2-diacyl-sn-glycero-3-phosphate + ADP + H(+). Functionally, phosphorylates diacylglycerol (DAG) to generate phosphatidic acid (PA). In Drosophila yakuba (Fruit fly), this protein is Diacylglycerol kinase eta.